A 150-amino-acid chain; its full sequence is UPF0756 membrane protein HAPS_1649 (150 aa).

A run of 5 helical transmembrane segments spans residues 1-21, 27-46, 52-72, 82-102, and 123-143; these read MSLQ…LGIF, VTIS…SKYV, YGIK…LVSG, LINW…WLGG, and IIGV…AGIL.

Belongs to the UPF0756 family.

The protein resides in the cell membrane. The sequence is that of UPF0756 membrane protein HAPS_1649 from Glaesserella parasuis serovar 5 (strain SH0165) (Haemophilus parasuis).